The chain runs to 341 residues: 33 kDa chaperonin (341 aa).

2 disulfide bridges follow: Cys245-Cys247 and Cys278-Cys281.

It belongs to the HSP33 family. Under oxidizing conditions two disulfide bonds are formed involving the reactive cysteines. Under reducing conditions zinc is bound to the reactive cysteines and the protein is inactive.

It is found in the cytoplasm. In terms of biological role, redox regulated molecular chaperone. Protects both thermally unfolding and oxidatively damaged proteins from irreversible aggregation. Plays an important role in the bacterial defense system toward oxidative stress. The polypeptide is 33 kDa chaperonin (Thermus thermophilus (strain ATCC BAA-163 / DSM 7039 / HB27)).